We begin with the raw amino-acid sequence, 135 residues long: Histone H1, macronuclear (135 aa).

Residues 1–17 (MPAKTATAVKRTTTTKK) are compositionally biased toward low complexity. Residues 1–135 (MPAKTATAVK…GGKKKSAKKN (135 aa)) are disordered. Basic residues-rich tracts occupy residues 18 to 54 (SAAK…RRTP) and 62 to 79 (KATK…RSAT). Low complexity predominate over residues 80 to 112 (KKTTAAPAAAAAPATDAPAAAATPSKATGSAKK). The span at 113–135 (ASARKSSAKKPAKGGKKKSAKKN) shows a compositional bias: basic residues.

It localises to the nucleus. It is found in the chromosome. Histones H1 are necessary for the condensation of nucleosome chains into higher-order structures. The polypeptide is Histone H1, macronuclear (Euplotes eurystomus (Ciliate)).